A 303-amino-acid polypeptide reads, in one-letter code: Protease HtpX homolog (303 aa).

Helical transmembrane passes span 4-24 (VVLFLLTNLAVIAVLSITARI) and 38-58 (MGMLLAFAALIGFGGAFISLL). Zn(2+) is bound at residue histidine 144. Glutamate 145 is an active-site residue. Histidine 148 lines the Zn(2+) pocket. 2 consecutive transmembrane segments (helical) span residues 152–172 (GDMVTLTLIQGVVNTFVIFLS) and 199–219 (ISSIAFEIVFGVLASIVVMYF). Glutamate 224 contacts Zn(2+).

The protein belongs to the peptidase M48B family. Zn(2+) serves as cofactor.

The protein localises to the cell inner membrane. This Chlorobium phaeobacteroides (strain BS1) protein is Protease HtpX homolog.